A 257-amino-acid polypeptide reads, in one-letter code: Adenylate kinase (257 aa).

An ATP-binding site is contributed by Gly-52–Thr-57. Residues Ala-72–Val-101 form an NMP region. AMP contacts are provided by residues Thr-73, Arg-78, Gly-99–Val-101, Gly-128–Arg-131, and Gln-135. Residues Gly-169–Asp-206 are LID. Residues Arg-170 and Ser-179–Tyr-180 contribute to the ATP site. AMP contacts are provided by Arg-203 and Arg-214. Gln-242 contacts ATP.

The protein belongs to the adenylate kinase family. AK2 subfamily. As to quaternary structure, monomer.

Its subcellular location is the cytoplasm. The protein localises to the cytosol. It localises to the mitochondrion intermembrane space. The catalysed reaction is AMP + ATP = 2 ADP. In terms of biological role, catalyzes the reversible transfer of the terminal phosphate group between ATP and AMP. Plays an important role in cellular energy homeostasis and in adenine nucleotide metabolism. Adenylate kinase activity is critical for regulation of the phosphate utilization and the AMP de novo biosynthesis pathways. This is Adenylate kinase (adk1) from Aspergillus fumigatus (strain CBS 144.89 / FGSC A1163 / CEA10) (Neosartorya fumigata).